We begin with the raw amino-acid sequence, 561 residues long: MTTLKITGMTCDSCAAHVKEALEKVPGVQSALVSYPKGTAQLAIEAGTSSDALTTAVAGLGYEATLADAPPTDNRAGLLDKMRGWIGAADKPSGNERPLQVVVIGSGGAAMAAALKAVEQGAQVTLIERGTIGGTCVNVGCVPSKIMIRVAHIAHLRRESPFDGGMPPTSPTILRERLLAQQQARVEELRHAKYEGILDGNSAITVLHGEARFKDDQSLIVSLNEGGERVVMFDRCLVATGASPAVPPIPGLKESPYWTSTEALASDTIPERLAVIGSSVVALELAQAFARLGSKVTALARNTLFFREDPAIGEAVTAAFRAEGIEVLEHTQASQVAHMDGEFVLTTTHGELRADKLLVATGRTPNTRSLALEAAGVAVNAQGAIVIDKGMRTSSPNIYAAGDCTDQPQFVYVAAAAGTRAAINMTGGDAALDLTAMPAVVFTDPQVATVGYSEAEAHHDGIETDSRLLTLDNVPRALANFDTRGFIKLVIEEGSGRLIGVQAVAPEAGELIQTAVLAIRNRMTVQELADQLFPYLTMVEGLKLAAQTFSKDVKQLSCCAG.

One can recognise an HMA domain in the interval 1-65 (MTTLKITGMT…AVAGLGYEAT (65 aa)). Residues Cys-11 and Cys-14 each coordinate a metal cation. FAD contacts are provided by Ala-110, Gly-130, and Thr-135. Cys-136 and Cys-141 form a disulfide bridge. Residues Lys-145, Ala-211, Asp-403, and Val-411 each coordinate FAD. Hg(2+) is bound by residues Cys-558 and Cys-559.

The protein belongs to the class-I pyridine nucleotide-disulfide oxidoreductase family. In terms of assembly, homodimer. FAD is required as a cofactor.

The catalysed reaction is Hg + NADP(+) + H(+) = Hg(2+) + NADPH. In terms of biological role, resistance to Hg(2+) in bacteria appears to be governed by a specialized system which includes mercuric reductase. MerA protein is responsible for volatilizing mercury as Hg(0). This Enterobacter agglomerans (Erwinia herbicola) protein is Mercuric reductase (merA).